The sequence spans 350 residues: Peroxidase 24 (350 aa).

Positions 1-27 are cleaved as a signal peptide; that stretch reads MANKSLEIRFLFPLVLFLVVKLLCVDG. 4 disulfide bridges follow: Cys55-Cys135, Cys88-Cys93, Cys141-Cys346, and Cys221-Cys253. Asn73 is a glycosylation site (N-linked (GlcNAc...) asparagine). His86 (proton acceptor) is an active-site residue. The Ca(2+) site is built by Asp87, Val90, Gly92, Asp94, and Ser96. Pro184 provides a ligand contact to substrate. An N-linked (GlcNAc...) asparagine glycan is attached at Asn189. His214 lines the heme b pocket. Residue Thr215 participates in Ca(2+) binding. Asn230 carries an N-linked (GlcNAc...) asparagine glycan. The Ca(2+) site is built by Asp269 and Asp277.

This sequence belongs to the peroxidase family. Classical plant (class III) peroxidase subfamily. The cofactor is heme b. Ca(2+) is required as a cofactor.

The protein resides in the secreted. The catalysed reaction is 2 a phenolic donor + H2O2 = 2 a phenolic radical donor + 2 H2O. In terms of biological role, removal of H(2)O(2), oxidation of toxic reductants, biosynthesis and degradation of lignin, suberization, auxin catabolism, response to environmental stresses such as wounding, pathogen attack and oxidative stress. These functions might be dependent on each isozyme/isoform in each plant tissue. The polypeptide is Peroxidase 24 (PER24) (Arabidopsis thaliana (Mouse-ear cress)).